The primary structure comprises 310 residues: tRNA uridine(34) hydroxylase (310 aa).

Positions 124-218 (SDPEVLLIDT…YFEEVPQEES (95 aa)) constitute a Rhodanese domain. The Cysteine persulfide intermediate role is filled by Cys-178.

The protein belongs to the TrhO family.

It catalyses the reaction uridine(34) in tRNA + AH2 + O2 = 5-hydroxyuridine(34) in tRNA + A + H2O. Its function is as follows. Catalyzes oxygen-dependent 5-hydroxyuridine (ho5U) modification at position 34 in tRNAs. The polypeptide is tRNA uridine(34) hydroxylase (Pseudomonas putida (strain W619)).